A 66-amino-acid polypeptide reads, in one-letter code: Large ribosomal subunit protein bL33c (66 aa).

It belongs to the bacterial ribosomal protein bL33 family.

The protein resides in the plastid. It is found in the chloroplast. The chain is Large ribosomal subunit protein bL33c from Phalaenopsis aphrodite subsp. formosana (Moth orchid).